Reading from the N-terminus, the 234-residue chain is Putative B3 domain-containing protein At2g18810 (234 aa).

Residues 55-88 (CKNQDPEQNPNRVASSPSLCHVKSKRPQKGVSNK) form a disordered region. Residues 60-72 (PEQNPNRVASSPS) are compositionally biased toward polar residues. Positions 87 to 185 (NKPILDMDFL…MLFFALVLSD (99 aa)) form a DNA-binding region, TF-B3.

It is found in the nucleus. This chain is Putative B3 domain-containing protein At2g18810, found in Arabidopsis thaliana (Mouse-ear cress).